Reading from the N-terminus, the 313-residue chain is Putative S-adenosyl-L-methionine-dependent methyltransferase MUL_0706 (313 aa).

Residues D132 and 161–162 (DL) each bind S-adenosyl-L-methionine.

This sequence belongs to the UPF0677 family.

Its function is as follows. Exhibits S-adenosyl-L-methionine-dependent methyltransferase activity. This Mycobacterium ulcerans (strain Agy99) protein is Putative S-adenosyl-L-methionine-dependent methyltransferase MUL_0706.